The sequence spans 97 residues: Thiosulfate sulfurtransferase/rhodanese-like domain-containing protein 3 (97 aa).

In terms of domain architecture, Rhodanese spans 32 to 84; sequence YKELKNLLNSKNIMLIDVREIWEILEYQKIPESINVPLDEVGEALQMNPRDFK. Position 84 is an N6-succinyllysine (K84).

The chain is Thiosulfate sulfurtransferase/rhodanese-like domain-containing protein 3 (TSTD3) from Homo sapiens (Human).